The primary structure comprises 92 residues: Large ribosomal subunit protein bL27 (92 aa).

The interval 1-21 (MSKKKGVGSSRNGRDSESKRL) is disordered. Residues 12 to 21 (NGRDSESKRL) are compositionally biased toward basic and acidic residues.

It belongs to the bacterial ribosomal protein bL27 family.

The protein is Large ribosomal subunit protein bL27 of Halothermothrix orenii (strain H 168 / OCM 544 / DSM 9562).